Here is a 135-residue protein sequence, read N- to C-terminus: Protein PsiE homolog (135 aa).

4 helical membrane-spanning segments follow: residues valine 20–leucine 40, tyrosine 54–valine 74, histidine 82–valine 102, and proline 107–alanine 127.

It belongs to the PsiE family.

The protein localises to the cell inner membrane. The polypeptide is Protein PsiE homolog (Yersinia pestis (strain Pestoides F)).